The following is a 529-amino-acid chain: ADP,ATP carrier protein 1 (529 aa).

12 helical membrane passes run 24-44 (LKKV…YTIL), 63-83 (IPFI…LIYA), 93-113 (ALFY…PLVI), 124-144 (DFAD…IAML), 149-169 (FAAF…LMFW), 184-204 (FYAL…PAIV), 220-240 (WGVT…IIAA), 284-304 (YMLL…LVEV), 322-342 (AFMG…MLFI), 356-376 (ALVT…LVIF), 381-401 (TGLV…VGAV), and 463-483 (ISAM…VWLT). Positions 509–520 (AAEKEASPAAKE) are enriched in low complexity. Positions 509 to 529 (AAEKEASPAAKEVSPAIEGVS) are disordered.

It belongs to the ADP/ATP translocase tlc family.

It is found in the cell membrane. The polypeptide is ADP,ATP carrier protein 1 (tlcA) (Chlamydia muridarum (strain MoPn / Nigg)).